We begin with the raw amino-acid sequence, 500 residues long: Aspartyl/glutamyl-tRNA(Asn/Gln) amidotransferase subunit B (500 aa).

It belongs to the GatB/GatE family. GatB subfamily. Heterotrimer of A, B and C subunits.

It catalyses the reaction L-glutamyl-tRNA(Gln) + L-glutamine + ATP + H2O = L-glutaminyl-tRNA(Gln) + L-glutamate + ADP + phosphate + H(+). The catalysed reaction is L-aspartyl-tRNA(Asn) + L-glutamine + ATP + H2O = L-asparaginyl-tRNA(Asn) + L-glutamate + ADP + phosphate + 2 H(+). Its function is as follows. Allows the formation of correctly charged Asn-tRNA(Asn) or Gln-tRNA(Gln) through the transamidation of misacylated Asp-tRNA(Asn) or Glu-tRNA(Gln) in organisms which lack either or both of asparaginyl-tRNA or glutaminyl-tRNA synthetases. The reaction takes place in the presence of glutamine and ATP through an activated phospho-Asp-tRNA(Asn) or phospho-Glu-tRNA(Gln). The sequence is that of Aspartyl/glutamyl-tRNA(Asn/Gln) amidotransferase subunit B from Rhizobium johnstonii (strain DSM 114642 / LMG 32736 / 3841) (Rhizobium leguminosarum bv. viciae).